The chain runs to 74 residues: MASNKVSFFLVLCLCILLAGECIESPIFTGNKCSDPTGMDKDGKCLDYCHAQGYPGGSCIGFIDQGYMCVCKVG.

Residues 1–22 (MASNKVSFFLVLCLCILLAGEC) form the signal peptide. Intrachain disulfides connect Cys-33–Cys-59, Cys-45–Cys-69, and Cys-49–Cys-71.

This sequence belongs to the DEFL family.

Its subcellular location is the secreted. The chain is Putative defensin-like protein 36 from Arabidopsis thaliana (Mouse-ear cress).